The sequence spans 185 residues: Ribosome-recycling factor (185 aa).

The segment at 139-159 (IDSLEKDGDVSGDEADRAKKK) is disordered. The span at 141–159 (SLEKDGDVSGDEADRAKKK) shows a compositional bias: basic and acidic residues.

The protein belongs to the RRF family.

The protein resides in the cytoplasm. Responsible for the release of ribosomes from messenger RNA at the termination of protein biosynthesis. May increase the efficiency of translation by recycling ribosomes from one round of translation to another. The polypeptide is Ribosome-recycling factor (Sorangium cellulosum (strain So ce56) (Polyangium cellulosum (strain So ce56))).